A 440-amino-acid polypeptide reads, in one-letter code: Glutamate-1-semialdehyde 2,1-aminomutase (440 aa).

N6-(pyridoxal phosphate)lysine is present on lysine 271.

Belongs to the class-III pyridoxal-phosphate-dependent aminotransferase family. HemL subfamily. As to quaternary structure, homodimer. It depends on pyridoxal 5'-phosphate as a cofactor.

It localises to the cytoplasm. The enzyme catalyses (S)-4-amino-5-oxopentanoate = 5-aminolevulinate. The protein operates within porphyrin-containing compound metabolism; protoporphyrin-IX biosynthesis; 5-aminolevulinate from L-glutamyl-tRNA(Glu): step 2/2. The protein is Glutamate-1-semialdehyde 2,1-aminomutase of Chlamydia pneumoniae (Chlamydophila pneumoniae).